The sequence spans 483 residues: Glutamate--tRNA ligase 1 (483 aa).

The short motif at 9 to 19 is the 'HIGH' region element; that stretch reads PSPTGFLHIGG. Positions 238–242 match the 'KMSKS' region motif; it reads KLSKR. K241 contacts ATP.

It belongs to the class-I aminoacyl-tRNA synthetase family. Glutamate--tRNA ligase type 1 subfamily. As to quaternary structure, monomer.

It localises to the cytoplasm. The catalysed reaction is tRNA(Glu) + L-glutamate + ATP = L-glutamyl-tRNA(Glu) + AMP + diphosphate. In terms of biological role, catalyzes the attachment of glutamate to tRNA(Glu) in a two-step reaction: glutamate is first activated by ATP to form Glu-AMP and then transferred to the acceptor end of tRNA(Glu). This is Glutamate--tRNA ligase 1 from Bartonella henselae (strain ATCC 49882 / DSM 28221 / CCUG 30454 / Houston 1) (Rochalimaea henselae).